The following is a 136-amino-acid chain: Protein NrdI (136 aa).

This sequence belongs to the NrdI family.

Functionally, probably involved in ribonucleotide reductase function. The chain is Protein NrdI from Escherichia coli (strain 55989 / EAEC).